A 259-amino-acid polypeptide reads, in one-letter code: Protein IQ-DOMAIN 10 (259 aa).

A disordered region spans residues 18–39 (KNKSNRGNVHSETSNRVKPVES). In terms of domain architecture, IQ spans 50–77 (EVAVIRIQKAFRAFKARKRLCSLKSARR). The tract at residues 61-71 (RAFKARKRLCS) is calmodulin-binding. The disordered stretch occupies residues 226 to 259 (KPSKKPEKSSPNNVITKTSAKPDEVGNSKKPGSG).

This sequence belongs to the IQD family. In terms of assembly, binds to multiple calmodulin (CaM) in the presence of Ca(2+) and CaM-like proteins.

It is found in the nucleus. The protein localises to the cytoplasm. It localises to the cytoskeleton. Functionally, may be involved in cooperative interactions with calmodulins or calmodulin-like proteins. Recruits calmodulin proteins to microtubules, thus being a potential scaffold in cellular signaling and trafficking. May associate with nucleic acids and regulate gene expression at the transcriptional or post-transcriptional level. The polypeptide is Protein IQ-DOMAIN 10 (Arabidopsis thaliana (Mouse-ear cress)).